The following is a 315-amino-acid chain: Protein sprouty homolog 2 (315 aa).

Residues 1–14 are compositionally biased toward polar residues; it reads MEARAQSGSGSQPL. 2 disordered regions span residues 1 to 38 and 51 to 140; these read MEARAQSGSGSQPLLQAPRDSGRQRGEPDPRDALPQQV and NTNE…GSSF. Over residues 20–32 the composition is skewed to basic and acidic residues; that stretch reads DSGRQRGEPDPRD. The span at 88–100 shows a compositional bias: pro residues; sequence PRQPSRPQHPPAH. The span at 109–140 shows a compositional bias: low complexity; that stretch reads RSISTVSSGSRSSTRTSTSSSSSEQRLLGSSF. Residues 118 to 315 are required for interaction with CAV1; the sequence is SRSSTRTSTS…VPPRNFEKPT (198 aa). An SPR domain is found at 177–291; the sequence is KCEDCGKCKC…CYDRVNRPGC (115 aa). The segment at 178-315 is required for interaction with TESK1; it reads CEDCGKCKCK…VPPRNFEKPT (138 aa).

It belongs to the sprouty family. Forms heterodimers with SPRY1. Forms a tripartite complex containing GAB1, METTL13 and SPRY2. Within the complex interacts with METTL13. Interacts with RAF1. Interacts (via C-terminus) with TESK1 (via C-terminus); the interaction disrupts SPRY2 interaction with GRB2, potentially via disruption of SPRY2 serine dephosphorylation. Interacts with PPP2R1A/PP2A-A and PPP2CA/PP2A-C; the interaction with PPP2CA/PP2A-C is inhibited by interaction with TESK1, possibly by vesicular sequestration of SPRY2. Inhibition of the interaction with the serine/threonine-protein phosphatase 2A (PP2A) holoenzyme results in loss of PP2A-mediated dephosphorylation, resulting in the loss of SPRY2 interaction with GRB2. Interacts with GRB2. Interacts with CBL/C-CBL; the interaction inhibits CBL-mediated ubiquitination of EGFR. Interacts (via C-terminus) with CAV1 (via C-terminus). Post-translationally, cleaved at Pro-144 by the prolyl endopeptidase FAP (seprase) activity (in vitro).

Its subcellular location is the cytoplasm. It is found in the cytoskeleton. The protein localises to the cell projection. The protein resides in the ruffle membrane. Antagonist of fibroblast growth factor (FGF) pathways via inhibition of FGF-mediated phosphorylation of ERK1/2. Thereby acts as an antagonist of FGF-induced retinal lens fiber differentiation, may inhibit limb bud outgrowth and may negatively modulate respiratory organogenesis. Inhibits TGFB-induced epithelial-to-mesenchymal transition in retinal lens epithelial cells. Inhibits CBL/C-CBL-mediated EGFR ubiquitination. The protein is Protein sprouty homolog 2 (SPRY2) of Bos taurus (Bovine).